Consider the following 242-residue polypeptide: Caffeoyl-CoA O-methyltransferase 4 (242 aa).

Position 16 (Lys-16) interacts with substrate. S-adenosyl-L-methionine contacts are provided by residues Thr-58, Glu-80, 82-83, Ser-88, Asp-106, and Ala-135; that span reads GV. Asp-158 is a substrate binding site. Asp-158 is a binding site for a divalent metal cation. Residue Asp-160 coordinates S-adenosyl-L-methionine. A divalent metal cation contacts are provided by Asp-184 and Asn-185. Asn-189 is a substrate binding site.

Belongs to the class I-like SAM-binding methyltransferase superfamily. Cation-dependent O-methyltransferase family. CCoAMT subfamily. Requires Mg(2+) as cofactor. Mostly expressed in the bottom and middle parts of the stems.

It carries out the reaction (E)-caffeoyl-CoA + S-adenosyl-L-methionine = (E)-feruloyl-CoA + S-adenosyl-L-homocysteine + H(+). It participates in aromatic compound metabolism; phenylpropanoid biosynthesis. Functionally, methylates caffeoyl-CoA to feruloyl-CoA and 5-hydroxyferuloyl-CoA to sinapoyl-CoA. Plays a role in the synthesis of feruloylated polysaccharides. Involved in the reinforcement of the plant cell wall. Also involved in the responding to wounding or pathogen challenge by the increased formation of cell wall-bound ferulic acid polymers. In Nicotiana tabacum (Common tobacco), this protein is Caffeoyl-CoA O-methyltransferase 4 (CCOAOMT4).